The chain runs to 22 residues: Antimicrobial peptide 5 (22 aa).

At L22 the chain carries Leucine amide.

In terms of tissue distribution, skin.

It localises to the secreted. Has very strong antimicrobial activity against Gram-positive bacterium S.aureus, Gram-negative bacterium E.coli and yeast C.albicans. Has strong hemolytic activity against human red blood cells. This chain is Antimicrobial peptide 5, found in Xenopus tropicalis (Western clawed frog).